A 236-amino-acid polypeptide reads, in one-letter code: Probable chemoreceptor glutamine deamidase CheD (236 aa).

The tract at residues 1 to 20 is disordered; that stretch reads MIEFGKRATPQSAADAVRGD.

This sequence belongs to the CheD family.

The catalysed reaction is L-glutaminyl-[protein] + H2O = L-glutamyl-[protein] + NH4(+). Functionally, probably deamidates glutamine residues to glutamate on methyl-accepting chemotaxis receptors (MCPs), playing an important role in chemotaxis. This Ralstonia pickettii (strain 12J) protein is Probable chemoreceptor glutamine deamidase CheD.